Reading from the N-terminus, the 638-residue chain is 1-deoxy-D-xylulose-5-phosphate synthase (638 aa).

Residues histidine 76 and 117-119 each bind thiamine diphosphate; that span reads AHS. Position 148 (aspartate 148) interacts with Mg(2+). Thiamine diphosphate is bound by residues 149 to 150, asparagine 177, tyrosine 287, and glutamate 369; that span reads GS. A Mg(2+)-binding site is contributed by asparagine 177.

This sequence belongs to the transketolase family. DXPS subfamily. As to quaternary structure, homodimer. Mg(2+) is required as a cofactor. It depends on thiamine diphosphate as a cofactor.

It catalyses the reaction D-glyceraldehyde 3-phosphate + pyruvate + H(+) = 1-deoxy-D-xylulose 5-phosphate + CO2. Its pathway is metabolic intermediate biosynthesis; 1-deoxy-D-xylulose 5-phosphate biosynthesis; 1-deoxy-D-xylulose 5-phosphate from D-glyceraldehyde 3-phosphate and pyruvate: step 1/1. In terms of biological role, catalyzes the acyloin condensation reaction between C atoms 2 and 3 of pyruvate and glyceraldehyde 3-phosphate to yield 1-deoxy-D-xylulose-5-phosphate (DXP). This Rhodopseudomonas palustris (strain HaA2) protein is 1-deoxy-D-xylulose-5-phosphate synthase.